The primary structure comprises 63 residues: Large ribosomal subunit protein bL28 (63 aa).

It belongs to the bacterial ribosomal protein bL28 family.

This Clostridium perfringens (strain SM101 / Type A) protein is Large ribosomal subunit protein bL28.